A 426-amino-acid polypeptide reads, in one-letter code: Oligouridylate-binding protein 1A (426 aa).

The interval 1–26 (MQNQRLIKQQQQQQQQQHQQAMIQQA) is disordered. Residues 9-26 (QQQQQQQQQHQQAMIQQA) are compositionally biased toward low complexity. RRM domains follow at residues 63-137 (RSVY…WAYA) and 148-226 (FNIF…WATK). The disordered stretch occupies residues 230–268 (FGEDKHSSDGKSVVELTNGSSEDGRELSNEDAPENNPQF). Ser250 bears the Phosphoserine mark. The RRM 3 domain occupies 269 to 344 (TTVYVGNLSP…RQIRCSWGNK (76 aa)).

As to quaternary structure, interacts with UBA1A and UBA2A.

It localises to the nucleus. Heterogeneous nuclear ribonucleoprotein (hnRNP)-like protein that acts as a component of the pre-mRNA processing machinery. Functions to facilitate the nuclear maturation of plant pre-mRNAs. This is Oligouridylate-binding protein 1A (UBP1A) from Arabidopsis thaliana (Mouse-ear cress).